The chain runs to 457 residues: NAC domain-containing protein 69 (457 aa).

In terms of domain architecture, NAC spans 4-153 (DLVGYRFYPT…NYVICQVMYK (150 aa)). A DNA-binding region spans residues 107–159 (IGIKKTLVYYEGRVPKGVWTPWVMHEYHITCLPQDQRNYVICQVMYKGEDGDV). Disordered stretches follow at residues 158–180 (DVPS…SNTV) and 302–332 (DSNS…SNRQ). The segment covering 162-180 (GGNNSSEPSQSLVSDSNTV) has biased composition (polar residues). Residues 302–311 (DSNSDAESIS) show a composition bias toward low complexity. Residues 312 to 332 (ATSYQGTSSPGDDSVGSSNRQ) are compositionally biased toward polar residues. The helical transmembrane segment at 421–441 (IYLMRMIIGFILLLALISNII) threads the bilayer.

Its subcellular location is the membrane. The protein localises to the nucleus. Transcription activator activated by proteolytic cleavage through regulated intramembrane proteolysis (RIP). Involved in salt stress response during seed germination and seedling growth. Binds the auxin-responsive IAA30 gene promoter and may serve as a molecular link that interconnects a developmental feedback loop of auxin signaling with a salt signal transduction pathway during seed germination. This is NAC domain-containing protein 69 (NAC69) from Arabidopsis thaliana (Mouse-ear cress).